A 775-amino-acid chain; its full sequence is MGGAAVLDWMVQDGERLANCRHDHPLAILGPQPSDAGWTVRVWMPEAHSVTLLEGGREALMTAPNHPWVFETTLSHDPGSNYKVRVERGGITHEQHDPWAFRDEWMGDMDRHLFAQGNHHHIWQRMGAHLTQRDGISGVMFCLWAPHALSVSILGDLNSWDGRHHPMQQRLGGIWELFIPGLAEGSLYKYEIRTQDGHCYQKADPYGFQHEVRPDNSSVVARLDGFQWSDGSWMQRRDSSNPLEQPISVYEMHLGSWIHASAEEPWIQPDGSPRAPVPAADMKPGARLLTYAELAARLIPYVKERGFTHIELMPITEHPFDGSWGYQVTGWYAPTSRYGTPDEFRAFVDRCHAEGIGVIIDWVPGHFPKDAHGLAFFDGTHLYEHGDPRIGEHKEWGTLIFNYSRNEVRNFLVANLVFWFEQFHIDGIRVDAVASMLYRDYLRPDGEWLANEHGGRENTEAVQFLQQANHVLFQHFPGALSIAEESTTWPMVTQPTEIGGLGFNLKWNMGWMHDMLDYFELDPWFRQFHQNNITFSIWYTYTENFMLALSHDEVVHGKSHLLHKMPGDDWQKYANTRALLAYMWTHPGKKTIFMGMEFGQRAEWNVWGDLQWDLLNYEPHKGIQLLVDDLNTLYKAEPALWRDDFDQFGFQWIDCNDNRHSVISFMRRESSSGTWLVVVANFTPQSHSHYRVGVPLAGFYEEIFNTDAARYGGSNLGNMGGKPTDEWSIHGYENSLDLCLPPLSLLVFRHDPKRSLQAASASACDKADDETADTN.

Catalysis depends on D431, which acts as the Nucleophile. The active-site Proton donor is E484.

It belongs to the glycosyl hydrolase 13 family. GlgB subfamily. Monomer.

It catalyses the reaction Transfers a segment of a (1-&gt;4)-alpha-D-glucan chain to a primary hydroxy group in a similar glucan chain.. It participates in glycan biosynthesis; glycogen biosynthesis. Catalyzes the formation of the alpha-1,6-glucosidic linkages in glycogen by scission of a 1,4-alpha-linked oligosaccharide from growing alpha-1,4-glucan chains and the subsequent attachment of the oligosaccharide to the alpha-1,6 position. The sequence is that of 1,4-alpha-glucan branching enzyme GlgB from Parasynechococcus marenigrum (strain WH8102).